The chain runs to 233 residues: Riboflavin kinase (233 aa).

The tract at residues 1 to 104 is H-T-H motif-like; that stretch reads MVRDIKTFKF…YKKIFDDEGT (104 aa). The riboflavin kinase stretch occupies residues 105-233; it reads IKIKGEVFSG…GDFVEVEVIL (129 aa). 114 to 119 contributes to the CDP binding site; the sequence is GVGEGR. The Mg(2+) site is built by threonine 143 and asparagine 145. Threonine 200 and glutamate 208 together coordinate FMN. 213–216 serves as a coordination point for CDP; it reads VKLR.

Belongs to the archaeal riboflavin kinase family. Requires Mg(2+) as cofactor.

It catalyses the reaction riboflavin + CTP = CDP + FMN + H(+). It functions in the pathway cofactor biosynthesis; FMN biosynthesis; FMN from riboflavin (CTP route): step 1/1. In terms of biological role, catalyzes the CTP-dependent phosphorylation of riboflavin (vitamin B2) to form flavin mononucleotide (FMN). The protein is Riboflavin kinase (ribK) of Archaeoglobus fulgidus (strain ATCC 49558 / DSM 4304 / JCM 9628 / NBRC 100126 / VC-16).